A 307-amino-acid polypeptide reads, in one-letter code: Myeloid-associated differentiation marker-like protein 2 (307 aa).

MARVEL domains lie at 17-154 and 159-303; these read AVTS…ARPG and YMAT…RIRF. 7 helical membrane-spanning segments follow: residues 53 to 73, 90 to 110, 129 to 149, 163 to 183, 198 to 218, 232 to 252, and 278 to 298; these read FCVA…ACEF, AFAM…PLYF, LAAS…VALT, VSGL…GALV, VAVY…SVLG, VVYT…WPVF, and LVVA…LAYS.

The protein belongs to the MAL family.

The protein localises to the membrane. The polypeptide is Myeloid-associated differentiation marker-like protein 2 (MYADML2) (Bos taurus (Bovine)).